The chain runs to 147 residues: Sentan (147 aa).

Residues 1 to 32 are disordered; the sequence is MGGCMHSTQDKSLHLEGDPNPSAAPTSTCAPR. A compositionally biased stretch (basic and acidic residues) spans 8 to 17; that stretch reads TQDKSLHLEG.

The protein belongs to the S-100 family.

Its subcellular location is the cell projection. It localises to the cilium. Functionally, may be a component of the linker structure that bridges the ciliary membrane and peripheral singlet microtubules. The protein is Sentan (SNTN) of Homo sapiens (Human).